A 539-amino-acid chain; its full sequence is Bifunctional purine biosynthesis protein PurH (539 aa).

The MGS-like domain maps to 8–159 (FPIPDLHRVR…KNYAYTGVVT (152 aa)).

The protein belongs to the PurH family.

It carries out the reaction (6R)-10-formyltetrahydrofolate + 5-amino-1-(5-phospho-beta-D-ribosyl)imidazole-4-carboxamide = 5-formamido-1-(5-phospho-D-ribosyl)imidazole-4-carboxamide + (6S)-5,6,7,8-tetrahydrofolate. The enzyme catalyses IMP + H2O = 5-formamido-1-(5-phospho-D-ribosyl)imidazole-4-carboxamide. It participates in purine metabolism; IMP biosynthesis via de novo pathway; 5-formamido-1-(5-phospho-D-ribosyl)imidazole-4-carboxamide from 5-amino-1-(5-phospho-D-ribosyl)imidazole-4-carboxamide (10-formyl THF route): step 1/1. It functions in the pathway purine metabolism; IMP biosynthesis via de novo pathway; IMP from 5-formamido-1-(5-phospho-D-ribosyl)imidazole-4-carboxamide: step 1/1. In Bartonella tribocorum (strain CIP 105476 / IBS 506), this protein is Bifunctional purine biosynthesis protein PurH.